The following is a 118-amino-acid chain: MTIAEITIRQKFSYPFLFGNVLGHPWPRNVPRKEIKMLLFRTANNSFPGFLLIFTRKRRNLPKQRDNEIPRTRALETYLRVFSAARKQREADATASFWRLVTSASRSHYHMWPIKRII.

This is an uncharacterized protein from Saccharomyces cerevisiae (strain ATCC 204508 / S288c) (Baker's yeast).